The following is a 116-amino-acid chain: Nucleoid-associated protein Tfu_0045 (116 aa).

It belongs to the YbaB/EbfC family. In terms of assembly, homodimer.

Its subcellular location is the cytoplasm. The protein localises to the nucleoid. Its function is as follows. Binds to DNA and alters its conformation. May be involved in regulation of gene expression, nucleoid organization and DNA protection. This Thermobifida fusca (strain YX) protein is Nucleoid-associated protein Tfu_0045.